The chain runs to 1432 residues: Probable ATP-dependent RNA helicase spindle-E (1432 aa).

Positions M125–V292 constitute a Helicase ATP-binding domain. Residue G138–T145 coordinates ATP. The DEAH box signature appears at D238–H241. A Helicase C-terminal domain is found at V342 to N525. The Tudor domain maps to A936–E999.

This sequence belongs to the DEAD box helicase family. DEAH subfamily.

The protein resides in the cytoplasm. It catalyses the reaction ATP + H2O = ADP + phosphate + H(+). Probable ATP-binding RNA helicase which plays a central role during spermatogenesis and oogenesis by repressing transposable elements and preventing their mobilization, which is essential for the germline integrity. Acts via the piRNA metabolic process, which mediates the repression of transposable elements during meiosis by forming complexes composed of piRNAs and Piwi and govern the methylation and subsequent repression of transposons. Involved in the repression of LTR retrotransposon copia. Also involved in telomere regulation by repressing specialized telomeric retroelements HeT-A, TAHRE, and TART; Drosophila telomeres being maintained by transposition of specialized telomeric retroelements. Involved in telomeric trans-silencing, a repression mechanism by which a transposon or a transgene inserted in subtelomeric heterochromatin has the capacity to repress in trans in the female germline, a homologous transposon, or transgene located in euchromatin. Involved in the repression of testis-expressed Stellate genes by the homologous Su(Ste) repeats. Required for anteroposterior and dorsoventral axis formation during oogenesis. The sequence is that of Probable ATP-dependent RNA helicase spindle-E (spn-E) from Drosophila willistoni (Fruit fly).